We begin with the raw amino-acid sequence, 95 residues long: Mitochondrial import inner membrane translocase subunit Tim9 (95 aa).

Residues 35–59 (CFTDCIRDFTTRDVKDSEEKCSLNC) carry the Twin CX3C motif motif. Cystine bridges form between Cys-35–Cys-59 and Cys-39–Cys-55.

The protein belongs to the small Tim family. In terms of assembly, heterohexamer; composed of 3 copies of Tim9 and 3 copies of Tim10, named soluble 70 kDa complex. The complex associates with the Tim22 component of the TIM22 complex. Interacts with multi-pass transmembrane proteins in transit.

Its subcellular location is the mitochondrion inner membrane. Its function is as follows. Mitochondrial intermembrane chaperone that participates in the import and insertion of multi-pass transmembrane proteins into the mitochondrial inner membrane. May also be required for the transfer of beta-barrel precursors from the TOM complex to the sorting and assembly machinery (SAM complex) of the outer membrane. Acts as a chaperone-like protein that protects the hydrophobic precursors from aggregation and guide them through the mitochondrial intermembrane space. The polypeptide is Mitochondrial import inner membrane translocase subunit Tim9 (Tim9a) (Drosophila melanogaster (Fruit fly)).